A 450-amino-acid chain; its full sequence is ATP-dependent protease ATPase subunit HslU (450 aa).

ATP-binding positions include Val29, 71-76, Asp261, Glu328, and Arg400; that span reads GVGKTE.

It belongs to the ClpX chaperone family. HslU subfamily. A double ring-shaped homohexamer of HslV is capped on each side by a ring-shaped HslU homohexamer. The assembly of the HslU/HslV complex is dependent on binding of ATP.

It localises to the cytoplasm. In terms of biological role, ATPase subunit of a proteasome-like degradation complex; this subunit has chaperone activity. The binding of ATP and its subsequent hydrolysis by HslU are essential for unfolding of protein substrates subsequently hydrolyzed by HslV. HslU recognizes the N-terminal part of its protein substrates and unfolds these before they are guided to HslV for hydrolysis. The protein is ATP-dependent protease ATPase subunit HslU of Rickettsia felis (strain ATCC VR-1525 / URRWXCal2) (Rickettsia azadi).